The sequence spans 622 residues: Chaperone protein HscA homolog (622 aa).

This sequence belongs to the heat shock protein 70 family.

Its function is as follows. Chaperone involved in the maturation of iron-sulfur cluster-containing proteins. Has a low intrinsic ATPase activity which is markedly stimulated by HscB. The protein is Chaperone protein HscA homolog of Aromatoleum aromaticum (strain DSM 19018 / LMG 30748 / EbN1) (Azoarcus sp. (strain EbN1)).